The chain runs to 540 residues: Phosphatidylinositol 4-phosphate 5-kinase type-1 beta (540 aa).

The segment at 1-23 (MSSVTENGDVTAGKPNEEKTYKK) is disordered. Residues 25 to 395 (TSSAIKGAIQ…RFLKFMNTRV (371 aa)) form the PIPK domain.

The protein localises to the cytoplasm. The protein resides in the cytosol. It is found in the cell membrane. Its subcellular location is the endomembrane system. It carries out the reaction a 1,2-diacyl-sn-glycero-3-phospho-(1D-myo-inositol 4-phosphate) + ATP = a 1,2-diacyl-sn-glycero-3-phospho-(1D-myo-inositol-4,5-bisphosphate) + ADP + H(+). It catalyses the reaction 1-octadecanoyl-2-(5Z,8Z,11Z,14Z)-eicosatetraenoyl-sn-glycero-3-phospho-1D-myo-inositol 4-phosphate + ATP = 1-octadecanoyl-2-(5Z,8Z,11Z,14Z)-eicosatetraenoyl-sn-glycero-3-phospho-1D-myo-inositol 4,5-bisphosphate + ADP + H(+). The enzyme catalyses 1-octadecanoyl-2-(9Z)-octadecenoyl-sn-glycero-3-phospho-1D-myo-inositol 4-phosphate + ATP = 1-octadecanoyl-2-(9Z)-octadecenoyl-sn-glycero-3-phospho-1D-myo-inositol 4,5-bisphosphate + ADP + H(+). The catalysed reaction is 1-octadecanoyl-2-(9Z)-octadecenoyl-sn-glycero-3-phospho-1D-myo-inositol + ATP = 1-octadecanoyl-2-(9Z)-octadecenoyl-sn-glycero-3-phospho-1D-myo-inositol 5-phosphate + ADP + H(+). It carries out the reaction 1-octadecanoyl-2-(9Z,12Z)-octadecadienoyl-sn-glycero-3-phospho-1D-myo-inositol + ATP = 1-octadecanoyl-2-(9Z,12Z)-octadecadienoyl-sn-glycero-3-phospho-1D-myo-inositol 5-phosphate + ADP + H(+). It catalyses the reaction 1-octadecanoyl-2-(5Z,8Z,11Z,14Z-eicosatetraenoyl)-sn-glycero-3-phospho-(1D-myo-inositol) + ATP = 1-octadecanoyl-2-(5Z,8Z,11Z,14Z)-eicosatetraenoyl-sn-glycero-3-phospho-1D-myo-inositol 5-phosphate + ADP + H(+). The enzyme catalyses 1,2-di-(9Z,12Z)-octadecadienoyl-sn-glycero-3-phospho-1D-myo-inositol + ATP = 1,2-di(9Z,12Z)-octadecadienoyl-sn-glycero-3-phospho-1D-myo-inositol 5-phosphate + ADP + H(+). Its function is as follows. Catalyzes the phosphorylation of phosphatidylinositol 4-phosphate (PtdIns(4)P/PI4P) to form phosphatidylinositol 4,5-bisphosphate (PtdIns(4,5)P2/PIP2), a lipid second messenger that regulates several cellular processes such as signal transduction, vesicle trafficking, actin cytoskeleton dynamics, cell adhesion, and cell motility. PtdIns(4,5)P2 can directly act as a second messenger or can be utilized as a precursor to generate other second messengers: inositol 1,4,5-trisphosphate (IP3), diacylglycerol (DAG) or phosphatidylinositol-3,4,5-trisphosphate (PtdIns(3,4,5)P3/PIP3). The polypeptide is Phosphatidylinositol 4-phosphate 5-kinase type-1 beta (PIP5K1B) (Gallus gallus (Chicken)).